Reading from the N-terminus, the 247-residue chain is 1-(5-phosphoribosyl)-5-[(5-phosphoribosylamino)methylideneamino] imidazole-4-carboxamide isomerase (247 aa).

Catalysis depends on Asp-8, which acts as the Proton acceptor. Asp-130 acts as the Proton donor in catalysis.

This sequence belongs to the HisA/HisF family.

It is found in the cytoplasm. It catalyses the reaction 1-(5-phospho-beta-D-ribosyl)-5-[(5-phospho-beta-D-ribosylamino)methylideneamino]imidazole-4-carboxamide = 5-[(5-phospho-1-deoxy-D-ribulos-1-ylimino)methylamino]-1-(5-phospho-beta-D-ribosyl)imidazole-4-carboxamide. It functions in the pathway amino-acid biosynthesis; L-histidine biosynthesis; L-histidine from 5-phospho-alpha-D-ribose 1-diphosphate: step 4/9. This Leptospira biflexa serovar Patoc (strain Patoc 1 / Ames) protein is 1-(5-phosphoribosyl)-5-[(5-phosphoribosylamino)methylideneamino] imidazole-4-carboxamide isomerase.